Consider the following 910-residue polypeptide: Lysine-specific demethylase 7 homolog (910 aa).

Residues 1–11 are compositionally biased toward polar residues; sequence MDGNDINIQKN. Disordered regions lie at residues 1-58, 103-162, and 183-212; these read MDGN…HQTP, NKMG…GSEP, and QEELKLEVDSDSEEDDVPEQKTPKESDRCG. Over residues 25-35 the composition is skewed to basic and acidic residues; that stretch reads QHSDHKNHESA. Positions 43 to 58 are enriched in polar residues; the sequence is YTASQPALSSTEHQTP. The span at 118 to 130 shows a compositional bias: basic and acidic residues; the sequence is PKSEPKIEPHVTD. The span at 150–160 shows a compositional bias: polar residues; sequence ESNQNYVSNGS. The span at 200–210 shows a compositional bias: basic and acidic residues; sequence PEQKTPKESDR. The PHD-type zinc finger occupies 208–290; that stretch reads SDRCGGCGKF…KFFCPKCVPH (83 aa). One can recognise a JmjC domain in the interval 441 to 612; it reads SDNNEMKEIA…MQMRVYHLEN (172 aa). Substrate contacts are provided by residues 505–510, Tyr518, Lys525, and His580; that span reads TDFHVD. His508 and Asp510 together coordinate Fe cation. His580 contributes to the Fe cation binding site. 2 disordered regions span residues 712 to 790 and 864 to 910; these read KIQN…PSEV and EAVH…KLKM. Residues 748-757 show a composition bias toward basic residues; sequence YKKKYTKKAK. A compositionally biased stretch (basic and acidic residues) spans 758–780; the sequence is KDNDDAPKVKKAKKEEVPEEKVP.

It belongs to the JHDM1 histone demethylase family. JHDM1D subfamily. Fe(2+) serves as cofactor. Mainly expressed in neurons. Also weakly expressed in some muscle, intestinal and hypodermal cells.

Its subcellular location is the nucleus. Its activity is regulated as follows. Competitively inhibited by 2-hydroxyglutarate. Its function is as follows. Histone demethylase required for nervous system development. Specifically demethylates dimethylated 'Lys-9', 'Lys-23' and 'Lys-27' (H3K9me2, H3K23me2 and H3K27me2, respectively) of histone H3, thereby playing a central role in histone code. Promotes mitochondrial stress-induced longevity. This chain is Lysine-specific demethylase 7 homolog (jmjd-1.2), found in Caenorhabditis elegans.